Reading from the N-terminus, the 860-residue chain is GAS2-like protein 2 (860 aa).

The span at Met1–Arg12 shows a compositional bias: basic residues. A disordered region spans residues Met1 to Arg22. Residues Glu32 to Trp159 enclose the Calponin-homology (CH) domain. The GAR domain maps to Cys201–Arg273. Disordered stretches follow at residues Pro281–Ser459, Gln473–Ser574, Thr697–Arg743, Lys758–Pro781, and Ala801–Val860. Over residues Gly301 to Ser316 the composition is skewed to polar residues. The span at Pro347–Glu364 shows a compositional bias: basic and acidic residues. 2 stretches are compositionally biased toward polar residues: residues Lys365 to Ser393 and Gln473 to Pro485. The tract at residues Gln431–Val860 is interaction with ADORA2A and GNAS. A compositionally biased stretch (basic and acidic residues) spans Asn530–Thr549. Positions Arg724–Lys733 are enriched in polar residues. The segment covering Lys758 to Asp768 has biased composition (basic residues). Residues Ser828–Glu840 show a composition bias toward polar residues.

This sequence belongs to the GAS2 family. In terms of assembly, interacts with ADORA2A (via its cytoplasmic C-terminal domain). Interacts with GNAS, GNAL, GNAQ, and GNA13. Interacts with MAPRE1. In terms of tissue distribution, expressed in tracheal epithelial cells (at protein level).

It localises to the cytoplasm. The protein localises to the cytoskeleton. The protein resides in the cell membrane. It is found in the stress fiber. Its subcellular location is the cilium basal body. Its function is as follows. Involved in the cross-linking of microtubules and microfilaments. Regulates microtubule dynamics and stability by interacting with microtubule plus-end tracking proteins, such as MAPRE1, to regulate microtubule growth along actin stress fibers. Enhances ADORA2-mediated adenylyl cyclase activation by acting as a scaffold to recruit trimeric G-protein complexes to ADORA2A. Regulates ciliary orientation and performance in cells located in the airway. In Mus musculus (Mouse), this protein is GAS2-like protein 2 (Gas2l2).